The following is a 383-amino-acid chain: La protein homolog (383 aa).

Positions 1-43 (MTEVEAKATATEETTKEEEEAPETTAEQTEESAQETSENVSKL) are disordered. A compositionally biased stretch (acidic residues) spans 15-33 (TKEEEEAPETTAEQTEESA). Residues 37-129 (SENVSKLEAS…RRHPERPLPE (93 aa)) enclose the HTH La-type RNA-binding domain. One can recognise an RRM domain in the interval 141–228 (RTVYVKGFAP…RKMQDDYFEE (88 aa)). Residues 249-368 (HLPKGASVHL…RTPEGRQASR (120 aa)) enclose the xRRM domain. The segment at 343-383 (KDQQARRQASNARNKGRTPEGRQASRPPQEWRRKAKGGRGE) is disordered.

The protein localises to the nucleus. It is found in the cytoplasm. In terms of biological role, may be involved in transcription termination by RNA polymerase III. Binds RNA and DNA. Binds to the 3' end of the minus strand of Sindbis virus RNA. This may be significant for Sindbis virus RNA replication. This Aedes albopictus (Asian tiger mosquito) protein is La protein homolog.